A 688-amino-acid chain; its full sequence is Two-component response regulator ORR23 (688 aa).

Residues 25-140 (RVLAVDDDPV…ELRNIWQHVI (116 aa)) enclose the Response regulatory domain. Residue Asp-76 is modified to 4-aspartylphosphate. Residues 161–212 (PPNADSDHVHGHVTCGSPDQSGRPSKKRKEYCSEEEDEGEVNTQDIDDPSAP) are disordered. The segment covering 193–208 (SEEEDEGEVNTQDIDD) has biased composition (acidic residues). The myb-like GARP DNA-binding region spans 211-270 (APKKPRVVWSVELHRKFVAAVNQLGIDKAVPKRILELMNVEKLTRENVASHLQKYRLYLK).

Belongs to the ARR family. Type-B subfamily. Post-translationally, two-component system major event consists of a His-to-Asp phosphorelay between a sensor histidine kinase (HK) and a response regulator (RR). In plants, the His-to-Asp phosphorelay involves an additional intermediate named Histidine-containing phosphotransfer protein (HPt). This multistep phosphorelay consists of a His-Asp-His-Asp sequential transfer of a phosphate group between first a His and an Asp of the HK protein, followed by the transfer to a conserved His of the HPt protein and finally the transfer to an Asp in the receiver domain of the RR protein.

It localises to the nucleus. Its function is as follows. Transcriptional activator that binds specific DNA sequence. Functions as a response regulator involved in His-to-Asp phosphorelay signal transduction system. Phosphorylation of the Asp residue in the receiver domain activates the ability of the protein to promote the transcription of target genes. May directly activate some type-A response regulators in response to cytokinins. This Oryza sativa subsp. japonica (Rice) protein is Two-component response regulator ORR23.